A 278-amino-acid polypeptide reads, in one-letter code: Putative carbamate hydrolase RutD (278 aa).

It belongs to the AB hydrolase superfamily. Hydrolase RutD family.

It catalyses the reaction carbamate + 2 H(+) = NH4(+) + CO2. Its function is as follows. Involved in pyrimidine catabolism. May facilitate the hydrolysis of carbamate, a reaction that can also occur spontaneously. This is Putative carbamate hydrolase RutD from Yersinia enterocolitica serotype O:8 / biotype 1B (strain NCTC 13174 / 8081).